Here is a 561-residue protein sequence, read N- to C-terminus: Shugoshin 1 (561 aa).

The necessary for interaction with PPP2CA and PPP2R1A stretch occupies residues 1–176; the sequence is MAKERCLKKS…DTLGVDFDSG (176 aa). Residues 7–89 are a coiled coil; the sequence is LKKSFQDSLE…DIILQLRKEC (83 aa). Ser14 is modified (phosphoserine; by NEK2). Positions 192-200 match the D-box 1 motif; the sequence is RSSLKKHCN. A Phosphoserine modification is found at Ser256. Disordered stretches follow at residues 260–331 and 348–441; these read IQPG…SVSS and FRQK…HLSL. Over residues 267-296 the composition is skewed to basic and acidic residues; that stretch reads KTKEDILESKSEQTKSKQRDTQERKREEKR. A coiled-coil region spans residues 273–313; it reads LESKSEQTKSKQRDTQERKREEKRKANRRKSKRMSKYKENK. Over residues 297-307 the composition is skewed to basic residues; that stretch reads KANRRKSKRMS. The segment covering 308-318 has biased composition (basic and acidic residues); that stretch reads KYKENKSENKK. The KEN box signature appears at 310-312; the sequence is KEN. Residues 364–375 are compositionally biased toward low complexity; it reads SEVSLCESSGSG. The span at 388 to 398 shows a compositional bias: polar residues; sequence YIQNPTSNSDR. The span at 410–421 shows a compositional bias: basic and acidic residues; it reads KYTDEKETEGSK. The segment covering 422-433 has biased composition (low complexity); it reads PTKTPTTTPPET. Ser436 carries the post-translational modification Phosphoserine. The D-box 2 signature appears at 438–446; sequence HLSLKDITN. The PXVXL/I motif motif lies at 451–455; sequence PVVKI. The D-box 3 motif lies at 457–465; the sequence is RLSLSPKKN. Ser507 carries the phosphoserine; by NEK2 modification.

This sequence belongs to the shugoshin family. In terms of assembly, interacts with PPP2CA (or PPP2CB), PPP2R1B, PPP2R5A, PPP2R5B, PPP2R5C, PPP2R5D, PPP2R5E, SET, LRRC59, RBM10 (or RBM5), RPL10A, RPL28, RPL7, RPL7A and RPLP1. Interaction with protein phosphatase 2A occurs most probably through direct binding to the regulatory B56 subunits: PPP2R1B, PPP2R5A, PPP2R5B, PPP2R5C, PPP2R5D, PPP2R5E. Interacts with PPP2R1A and NEK2. Isoform 3 interacts with PLK1. Interacts with CDCA8. Ubiquitinated and degraded during mitotic exit by APC/C-Cdh1. Post-translationally, phosphorylation by NEK2 is essential for chromosome congression in mitosis and for the proper attachment of spindle microtubule to the kinetochore. Phosphorylated by PLK1 and AUKRB. In terms of tissue distribution, widely expressed. Highly expressed in testis. Expressed in lung, small intestine, breast, liver and placenta. Strongly overexpressed in 90% of breast cancers tested.

The protein localises to the nucleus. It is found in the chromosome. The protein resides in the centromere. Its subcellular location is the kinetochore. It localises to the cytoplasm. The protein localises to the cytoskeleton. It is found in the spindle pole. The protein resides in the microtubule organizing center. Its subcellular location is the centrosome. It localises to the nucleus speckle. Its function is as follows. Plays a central role in chromosome cohesion during mitosis by preventing premature dissociation of cohesin complex from centromeres after prophase, when most of cohesin complex dissociates from chromosomes arms. May act by preventing phosphorylation of the STAG2 subunit of cohesin complex at the centromere, ensuring cohesin persistence at centromere until cohesin cleavage by ESPL1/separase at anaphase. Essential for proper chromosome segregation during mitosis and this function requires interaction with PPP2R1A. Its phosphorylated form is necessary for chromosome congression and for the proper attachment of spindle microtubule to the kinetochore. Necessary for kinetochore localization of PLK1 and CENPF. May play a role in the tension sensing mechanism of the spindle-assembly checkpoint by regulating PLK1 kinetochore affinity. Isoform 3 plays a role in maintaining centriole cohesion involved in controlling spindle pole integrity. Involved in centromeric enrichment of AUKRB in prometaphase. The sequence is that of Shugoshin 1 from Homo sapiens (Human).